Reading from the N-terminus, the 172-residue chain is ATP synthase subunit b (172 aa).

Residues 13-33 (GINGGDILFQLVMFLILLALL) traverse the membrane as a helical segment.

The protein belongs to the ATPase B chain family. As to quaternary structure, F-type ATPases have 2 components, F(1) - the catalytic core - and F(0) - the membrane proton channel. F(1) has five subunits: alpha(3), beta(3), gamma(1), delta(1), epsilon(1). F(0) has three main subunits: a(1), b(2) and c(10-14). The alpha and beta chains form an alternating ring which encloses part of the gamma chain. F(1) is attached to F(0) by a central stalk formed by the gamma and epsilon chains, while a peripheral stalk is formed by the delta and b chains.

The protein localises to the cell membrane. F(1)F(0) ATP synthase produces ATP from ADP in the presence of a proton or sodium gradient. F-type ATPases consist of two structural domains, F(1) containing the extramembraneous catalytic core and F(0) containing the membrane proton channel, linked together by a central stalk and a peripheral stalk. During catalysis, ATP synthesis in the catalytic domain of F(1) is coupled via a rotary mechanism of the central stalk subunits to proton translocation. In terms of biological role, component of the F(0) channel, it forms part of the peripheral stalk, linking F(1) to F(0). The chain is ATP synthase subunit b from Priestia megaterium (strain ATCC 12872 / QMB1551) (Bacillus megaterium).